Reading from the N-terminus, the 319-residue chain is tRNA uridine(34) hydroxylase (319 aa).

The Rhodanese domain occupies 127–221 (KQEDTVIIDA…YGKDPEVQGE (95 aa)). Catalysis depends on C181, which acts as the Cysteine persulfide intermediate.

This sequence belongs to the TrhO family.

The enzyme catalyses uridine(34) in tRNA + AH2 + O2 = 5-hydroxyuridine(34) in tRNA + A + H2O. In terms of biological role, catalyzes oxygen-dependent 5-hydroxyuridine (ho5U) modification at position 34 in tRNAs. This chain is tRNA uridine(34) hydroxylase, found in Bacillus cereus (strain ATCC 10987 / NRS 248).